A 451-amino-acid polypeptide reads, in one-letter code: Phosphoglucosamine mutase (451 aa).

The Phosphoserine intermediate role is filled by S101. Mg(2+) is bound by residues S101, D240, D242, and D244. Position 101 is a phosphoserine (S101).

Belongs to the phosphohexose mutase family. Requires Mg(2+) as cofactor. Post-translationally, activated by phosphorylation.

It catalyses the reaction alpha-D-glucosamine 1-phosphate = D-glucosamine 6-phosphate. Its function is as follows. Catalyzes the conversion of glucosamine-6-phosphate to glucosamine-1-phosphate. This Alkalilimnicola ehrlichii (strain ATCC BAA-1101 / DSM 17681 / MLHE-1) protein is Phosphoglucosamine mutase.